We begin with the raw amino-acid sequence, 64 residues long: Bacteriocin plantaricin ASM1 (64 aa).

The signal sequence occupies residues 1-21 (MSKLVKTLTVDEISKIQTNGG). A cross-link (lanthionine (Ser-Cys)) is located at residues 61 to 64 (SYHC).

Contains 2 disulfide bonds.

The protein resides in the secreted. Functionally, bacteriocin with a narrow antibacterial spectrum. Antibacterial activity against the Gram-positive bacteria L.plantarun, L.pentosus, L.curvatus, L.lindneri, L.mesenteroides and E.faecilis. Lacks antibacterial activity against the Gram-positive bacteria L.brevis, L.sakei, L.lactis, P.acidilactici, B.subtilis, B.cereus, L.monocytogenes and S.aureus, and against the Gram-negative bacteria E.coli and S.typhimurium. The polypeptide is Bacteriocin plantaricin ASM1 (Lactiplantibacillus plantarum (Lactobacillus plantarum)).